The primary structure comprises 301 residues: GTP cyclohydrolase FolE2 (301 aa).

This sequence belongs to the GTP cyclohydrolase IV family.

It carries out the reaction GTP + H2O = 7,8-dihydroneopterin 3'-triphosphate + formate + H(+). Its pathway is cofactor biosynthesis; 7,8-dihydroneopterin triphosphate biosynthesis; 7,8-dihydroneopterin triphosphate from GTP: step 1/1. In terms of biological role, converts GTP to 7,8-dihydroneopterin triphosphate. The sequence is that of GTP cyclohydrolase FolE2 from Pseudomonas putida (strain GB-1).